The primary structure comprises 187 residues: UPF0301 protein GOX1459 (187 aa).

It belongs to the UPF0301 (AlgH) family.

The sequence is that of UPF0301 protein GOX1459 from Gluconobacter oxydans (strain 621H) (Gluconobacter suboxydans).